Here is a 387-residue protein sequence, read N- to C-terminus: 3-ketoacyl-CoA thiolase (387 aa).

Cysteine 91 functions as the Acyl-thioester intermediate in the catalytic mechanism. Catalysis depends on proton acceptor residues histidine 343 and cysteine 373.

It belongs to the thiolase-like superfamily. Thiolase family. Heterotetramer of two alpha chains (FadB) and two beta chains (FadA).

The protein localises to the cytoplasm. The catalysed reaction is an acyl-CoA + acetyl-CoA = a 3-oxoacyl-CoA + CoA. Its pathway is lipid metabolism; fatty acid beta-oxidation. Functionally, catalyzes the final step of fatty acid oxidation in which acetyl-CoA is released and the CoA ester of a fatty acid two carbons shorter is formed. The protein is 3-ketoacyl-CoA thiolase of Vibrio cholerae serotype O1 (strain ATCC 39541 / Classical Ogawa 395 / O395).